Consider the following 423-residue polypeptide: tRNA(Ile)-lysidine synthase (423 aa).

S18–S23 lines the ATP pocket.

The protein belongs to the tRNA(Ile)-lysidine synthase family.

The protein localises to the cytoplasm. The enzyme catalyses cytidine(34) in tRNA(Ile2) + L-lysine + ATP = lysidine(34) in tRNA(Ile2) + AMP + diphosphate + H(+). Its function is as follows. Ligates lysine onto the cytidine present at position 34 of the AUA codon-specific tRNA(Ile) that contains the anticodon CAU, in an ATP-dependent manner. Cytidine is converted to lysidine, thus changing the amino acid specificity of the tRNA from methionine to isoleucine. The chain is tRNA(Ile)-lysidine synthase from Aromatoleum aromaticum (strain DSM 19018 / LMG 30748 / EbN1) (Azoarcus sp. (strain EbN1)).